Reading from the N-terminus, the 359-residue chain is Peptide chain release factor 1 (359 aa).

Position 238 is an N5-methylglutamine (glutamine 238).

The protein belongs to the prokaryotic/mitochondrial release factor family. In terms of processing, methylated by PrmC. Methylation increases the termination efficiency of RF1.

Its subcellular location is the cytoplasm. Functionally, peptide chain release factor 1 directs the termination of translation in response to the peptide chain termination codons UAG and UAA. This chain is Peptide chain release factor 1, found in Mycoplasmopsis pulmonis (strain UAB CTIP) (Mycoplasma pulmonis).